The primary structure comprises 255 residues: Ribosomal RNA small subunit methyltransferase A (255 aa).

The S-adenosyl-L-methionine site is built by Asn-12, Leu-14, Gly-39, Glu-60, Asp-84, and Asn-106.

This sequence belongs to the class I-like SAM-binding methyltransferase superfamily. rRNA adenine N(6)-methyltransferase family. RsmA subfamily.

It is found in the cytoplasm. The enzyme catalyses adenosine(1518)/adenosine(1519) in 16S rRNA + 4 S-adenosyl-L-methionine = N(6)-dimethyladenosine(1518)/N(6)-dimethyladenosine(1519) in 16S rRNA + 4 S-adenosyl-L-homocysteine + 4 H(+). In terms of biological role, specifically dimethylates two adjacent adenosines (A1518 and A1519) in the loop of a conserved hairpin near the 3'-end of 16S rRNA in the 30S particle. May play a critical role in biogenesis of 30S subunits. This Herminiimonas arsenicoxydans protein is Ribosomal RNA small subunit methyltransferase A.